The sequence spans 156 residues: Organelle RRM domain-containing protein 2, mitochondrial (156 aa).

Residues 1–28 (MAMAMRLPAISRAVTEVASAPVGLRRLF) constitute a mitochondrion transit peptide. Residues 56–134 (TNLFVSGLSK…WVIFAEYARP (79 aa)) form the RRM domain. Position 64 is a phosphoserine (S64). Residues 137–148 (QSQSYQPQNNMS) are compositionally biased toward polar residues. The segment at 137–156 (QSQSYQPQNNMSRPPYYGNR) is disordered.

In terms of assembly, interacts with RBG3/ORRM3. Binds to RBG2/ORRM5.

The protein localises to the mitochondrion. Involved in C-to-U editing of mitochondrial RNA. Functions as minor mitochondrial editing factor. Controls 6 percent of the mitochondrial editing sites. In Arabidopsis thaliana (Mouse-ear cress), this protein is Organelle RRM domain-containing protein 2, mitochondrial.